The primary structure comprises 221 residues: Nucleolar protein 3 (221 aa).

G2 carries the N-myristoyl glycine lipid modification. The CARD domain maps to 4–95 (MQERPSETID…MPDPAWDWQH (92 aa)). The essential for interaction with BAX stretch occupies residues 20-70 (VETLQADSGLLLDALVARGVLTGPEYEALDALPDAERRVRRLLLLVQSKGE). A disordered region spans residues 107 to 221 (PPCPGHWTPE…GDESEGCENT (115 aa)). Acidic residues predominate over residues 132-143 (EEEEIGGPEDSE). A Phosphothreonine; by CK2 modification is found at T149. Composition is skewed to acidic residues over residues 165-201 (PDLE…EPEP) and 209-221 (FQEG…CENT).

In terms of assembly, oligomerizes (via CARD doamin). Interacts (via CARD domain) with CASP2; inhibits CASP2 activity in a phosphorylation-dependent manner. Interacts with CASP8; decreases CASP8 activity in a mitochondria localization- and phosphorylation-dependent manner and this interaction is dissociated by calcium. Interacts with TFPT; translocates NOL3 into the nucleus and negatively regulated TFPT-induced cell death. Interacts directly (via CARD domain) with FAS and FADD (via DED domain); inhibits death-inducing signaling complex (DISC) assembly by inhibiting the increase in FAS-FADD binding induced by FAS activation. Interacts (via CARD domain) with BAX (via a C-terminal 33 residues); inhibits BAX activation and translocation and consequently cytochrome c release from mitochondria. Interacts with PPM1G; may dephosphorylate NOL3. Interacts (via CARD domain) with BBC3 (via BH3 domain); preventing the association of BBC3 with BCL2 and resulting in activation of CASP8. Interacts (via CARD domain) with BAD(via BH3 domain); preventing the association of BAD with BCL2. Interacts directly (via CARD domain) with TNFRSF1A; inhibits TNF-signaling pathway. In terms of processing, phosphorylation at Thr-149 is required for its antiapoptotic effect by blocking death-inducing signaling complex (DISC) activity through the control of interaction with CASP8. Phosphorylation at Thr-149 results in translocation to mitochondria and this translocation enables the binding to CASP8. Dephosphorylated at Thr-149 by calcineurin; doesn't inhibit the association between FADD and CASP8 and the consequent apoptosis. Post-translationally, polyubiquitinated by MDM2; promoting proteasomal-dependent degradation in response to apoptotic stimuli. Highly expressed in skeletal muscle, heart and medulla.

Its subcellular location is the cytoplasm. It localises to the mitochondrion. The protein localises to the sarcoplasmic reticulum. It is found in the membrane. In terms of biological role, apoptosis repressor that blocks multiple modes of cell death. Inhibits extrinsic apoptotic pathways through two different ways. Firstly by interacting with FAS and FADD upon FAS activation blocking death-inducing signaling complex (DISC) assembly. Secondly by interacting with CASP8 in a mitochondria localization- and phosphorylation-dependent manner, limiting the amount of soluble CASP8 available for DISC-mediated activation. Inhibits intrinsic apoptotic pathway in response to a wide range of stresses, through its interaction with BAX resulting in BAX inactivation, preventing mitochondrial dysfunction and release of pro-apoptotic factors. Inhibits calcium-mediated cell death by functioning as a cytosolic calcium buffer, dissociating its interaction with CASP8 and maintaining calcium homeostasis. Negatively regulates oxidative stress-induced apoptosis by phosphorylation-dependent suppression of the mitochondria-mediated intrinsic pathway, by blocking CASP2 activation and BAX translocation. Negatively regulates hypoxia-induced apoptosis in part by inhibiting the release of cytochrome c from mitochondria in a caspase-independent manner. Also inhibits TNF-induced necrosis by preventing TNF-signaling pathway through TNFRSF1A interaction abrogating the recruitment of RIPK1 to complex I. Finally through its role as apoptosis repressor, promotes vascular remodeling through inhibition of apoptosis and stimulation of proliferation, in response to hypoxia. Inhibits too myoblast differentiation through caspase inhibition. The protein is Nucleolar protein 3 (Nol3) of Rattus norvegicus (Rat).